Consider the following 146-residue polypeptide: Hemoglobin subunit beta (146 aa).

An N-acetylvaline modification is found at V1. The Globin domain maps to 2–146; the sequence is HLTAEEKSAV…VANALAHKYH (145 aa). T12 is modified (phosphothreonine). A Phosphoserine modification is found at S44. K59 is subject to N6-acetyllysine. Position 63 (H63) interacts with heme b. The residue at position 82 (K82) is an N6-acetyllysine. H92 provides a ligand contact to heme b. Position 93 is an S-nitrosocysteine (C93). K144 is modified (N6-acetyllysine).

The protein belongs to the globin family. Heterotetramer of two alpha chains and two beta chains. In terms of tissue distribution, red blood cells.

In terms of biological role, involved in oxygen transport from the lung to the various peripheral tissues. This chain is Hemoglobin subunit beta (HBB), found in Meles meles (Eurasian badger).